A 296-amino-acid chain; its full sequence is NAD kinase (296 aa).

The Proton acceptor role is filled by Asp73. NAD(+)-binding positions include 73–74, Lys78, 151–152, Arg178, Asp180, and 191–196; these read DG, NE, and TAHAMS.

It belongs to the NAD kinase family. It depends on a divalent metal cation as a cofactor.

The protein resides in the cytoplasm. The enzyme catalyses NAD(+) + ATP = ADP + NADP(+) + H(+). Functionally, involved in the regulation of the intracellular balance of NAD and NADP, and is a key enzyme in the biosynthesis of NADP. Catalyzes specifically the phosphorylation on 2'-hydroxyl of the adenosine moiety of NAD to yield NADP. This Francisella tularensis subsp. tularensis (strain WY96-3418) protein is NAD kinase.